A 138-amino-acid chain; its full sequence is Large ribosomal subunit protein uL16 (138 aa).

Basic residues predominate over residues 1 to 16 (MLIPRRVKHRKQHHPG). The interval 1-25 (MLIPRRVKHRKQHHPGRSGQATGGT) is disordered.

The protein belongs to the universal ribosomal protein uL16 family. In terms of assembly, part of the 50S ribosomal subunit.

Binds 23S rRNA and is also seen to make contacts with the A and possibly P site tRNAs. The sequence is that of Large ribosomal subunit protein uL16 from Renibacterium salmoninarum (strain ATCC 33209 / DSM 20767 / JCM 11484 / NBRC 15589 / NCIMB 2235).